We begin with the raw amino-acid sequence, 58 residues long: Preprotein translocase subunit SecG (58 aa).

Residues 1-33 (MARRRKYEGLNPFVAAGLIKFSEEGELEKIKLS) are Cytoplasmic-facing. A helical transmembrane segment spans residues 34–55 (PKAAIAISLAIIAAILALNLLL). The Extracellular portion of the chain corresponds to 56-58 (PPP).

This sequence belongs to the SEC61-beta family. As to quaternary structure, component of the protein translocase complex. Heterotrimer consisting of alpha (SecY), beta (SecG) and gamma (SecE) subunits. Can form oligomers of the heterotrimer.

It localises to the cell membrane. Involved in protein export. The function of the beta subunit is unknown, but it may be involved in stabilization of the trimeric complex. The polypeptide is Preprotein translocase subunit SecG (Pyrobaculum calidifontis (strain DSM 21063 / JCM 11548 / VA1)).